A 363-amino-acid chain; its full sequence is 3-isopropylmalate dehydrogenase (363 aa).

78–91 (GPKWEHLPPDQQPE) is a binding site for NAD(+). Positions 99, 109, 138, and 227 each coordinate substrate. Asp-227, Asp-251, and Asp-255 together coordinate Mg(2+). An NAD(+)-binding site is contributed by 285 to 297 (GSAPDIAGKNIAN).

This sequence belongs to the isocitrate and isopropylmalate dehydrogenases family. LeuB type 1 subfamily. In terms of assembly, homodimer. Mg(2+) serves as cofactor. Requires Mn(2+) as cofactor.

It localises to the cytoplasm. The enzyme catalyses (2R,3S)-3-isopropylmalate + NAD(+) = 4-methyl-2-oxopentanoate + CO2 + NADH. Its pathway is amino-acid biosynthesis; L-leucine biosynthesis; L-leucine from 3-methyl-2-oxobutanoate: step 3/4. In terms of biological role, catalyzes the oxidation of 3-carboxy-2-hydroxy-4-methylpentanoate (3-isopropylmalate) to 3-carboxy-4-methyl-2-oxopentanoate. The product decarboxylates to 4-methyl-2 oxopentanoate. The chain is 3-isopropylmalate dehydrogenase from Shigella flexneri.